Consider the following 603-residue polypeptide: Beta-glucuronidase (603 aa).

2 residues coordinate D-glucuronate: aspartate 163 and asparagine 412. Glutamate 413 (proton donor) is an active-site residue. 5 residues coordinate D-glucuronate: asparagine 466, tyrosine 472, glutamate 504, tryptophan 549, and lysine 568. The active-site Nucleophile is glutamate 504. Residues 566-568 (NKK) carry the N-K motif motif.

It belongs to the glycosyl hydrolase 2 family. In terms of assembly, homotetramer.

It carries out the reaction a beta-D-glucuronoside + H2O = D-glucuronate + an alcohol. It catalyses the reaction 4-methylumbelliferone beta-D-glucuronate + H2O = 4-methylumbelliferone + D-glucuronate. With respect to regulation, potently inhibited by a set of synthetic compounds like thio-urea derivatives and analogs, and uronic isofagomine (UIFG) derivatives. Inhibitors of gut microbial beta-glucuronidases block the reactivation of glucuronidated cancer drugs, and thereby alleviate drug-induced GI toxicity. Its function is as follows. Displays beta-glucuronidase activity with the artificial substrate p-nitrophenyl-beta-D-glucuronide (PNPG) and with 4-methylumbelliferyl-glucuronide. Is likely capable of scavenging glucuronate from a range of chemically distinct xenobiotic and endobiotic glucuronides present in the gastrointestinal (GI) tract, to be able to utilize these diverse sources of carbon. As part of the GI microbiome, this enzyme is able to reactivate glucuronide drug conjugates, such reactivated compounds can significantly damage the GI tract. This chain is Beta-glucuronidase (uidA), found in Escherichia coli (strain K12).